Consider the following 1535-residue polypeptide: Putative protein TIC 214 C-terminal part (1535 aa).

3 disordered regions span residues Glu264–Asp283, Glu312–Ala333, and Asp1263–Lys1282.

This sequence belongs to the TIC214 family. Part of the Tic complex.

It is found in the plastid. The protein localises to the chloroplast. Involved in protein precursor import into chloroplasts. May be part of an intermediate translocation complex acting as a protein-conducting channel at the inner envelope. The sequence is that of Putative protein TIC 214 C-terminal part from Piper cenocladum (Ant piper).